A 391-amino-acid chain; its full sequence is Acridone synthase 2 (391 aa).

C164 is an active-site residue.

It belongs to the thiolase-like superfamily. Chalcone/stilbene synthases family. As to quaternary structure, homodimer.

It carries out the reaction N-methylanthraniloyl-CoA + 3 malonyl-CoA + 3 H(+) = 1,3-dihydroxy-N-methylacridone + 3 CO2 + 4 CoA + H2O. The sequence is that of Acridone synthase 2 (ACS2) from Ruta graveolens (Common rue).